Here is a 357-residue protein sequence, read N- to C-terminus: Anthranilate phosphoribosyltransferase (357 aa).

5-phospho-alpha-D-ribose 1-diphosphate contacts are provided by residues Gly-91, 94–95 (GD), Thr-99, 101–104 (NIST), 119–127 (KHGNRSVSS), and Ser-131. Residue Gly-91 coordinates anthranilate. Mg(2+) is bound at residue Ser-103. Position 122 (Asn-122) interacts with anthranilate. Arg-177 provides a ligand contact to anthranilate. Mg(2+) contacts are provided by Asp-235 and Glu-236.

This sequence belongs to the anthranilate phosphoribosyltransferase family. Homodimer. Requires Mg(2+) as cofactor.

The enzyme catalyses N-(5-phospho-beta-D-ribosyl)anthranilate + diphosphate = 5-phospho-alpha-D-ribose 1-diphosphate + anthranilate. The protein operates within amino-acid biosynthesis; L-tryptophan biosynthesis; L-tryptophan from chorismate: step 2/5. In terms of biological role, catalyzes the transfer of the phosphoribosyl group of 5-phosphorylribose-1-pyrophosphate (PRPP) to anthranilate to yield N-(5'-phosphoribosyl)-anthranilate (PRA). The protein is Anthranilate phosphoribosyltransferase of Shewanella baltica (strain OS185).